The sequence spans 388 residues: Ribonuclease D (388 aa).

The 168-residue stretch at 24 to 191 (QYVSDEASLN…LYPQLADKLK (168 aa)) folds into the 3'-5' exonuclease domain. The HRDC domain occupies 230–310 (TEHQLAYLKV…QTADLSNPPE (81 aa)).

Belongs to the RNase D family. A divalent metal cation serves as cofactor.

The protein localises to the cytoplasm. The enzyme catalyses Exonucleolytic cleavage that removes extra residues from the 3'-terminus of tRNA to produce 5'-mononucleotides.. Exonuclease involved in the 3' processing of various precursor tRNAs. Initiates hydrolysis at the 3'-terminus of an RNA molecule and releases 5'-mononucleotides. The sequence is that of Ribonuclease D from Shewanella sp. (strain ANA-3).